The sequence spans 183 residues: Pyruvoyl-dependent arginine decarboxylase 2 (183 aa).

Ser-41 is modified (pyruvic acid (Ser)).

Belongs to the PdaD family. Pyruvate is required as a cofactor.

The catalysed reaction is L-arginine + H(+) = agmatine + CO2. This is Pyruvoyl-dependent arginine decarboxylase 2 (pdaD2) from Methanosarcina acetivorans (strain ATCC 35395 / DSM 2834 / JCM 12185 / C2A).